A 79-amino-acid polypeptide reads, in one-letter code: Cell division topological specificity factor (79 aa).

The protein belongs to the MinE family.

In terms of biological role, prevents the cell division inhibition by proteins MinC and MinD at internal division sites while permitting inhibition at polar sites. This ensures cell division at the proper site by restricting the formation of a division septum at the midpoint of the long axis of the cell. The polypeptide is Cell division topological specificity factor (Nitratiruptor sp. (strain SB155-2)).